A 406-amino-acid polypeptide reads, in one-letter code: Indole-3-pyruvate monooxygenase YUCCA1 (406 aa).

Residue 21 to 26 participates in FAD binding; the sequence is GAGPSG. 184–189 contacts NADP(+); that stretch reads GCGNSG.

Belongs to the FMO family. FAD serves as cofactor. As to expression, expressed in coleoptile tips, root tips, leaf blade tips, shoot apical meristem, vasculature of stems and flowers.

It carries out the reaction indole-3-pyruvate + NADPH + O2 + H(+) = (indol-3-yl)acetate + CO2 + NADP(+) + H2O. Its function is as follows. Involved in auxin biosynthesis. Converts the indole-3-pyruvic acid (IPA) produced by the TAA family to indole-3-acetic acid (IAA). Functions downstream of TAR2 in auxin biosynthesis. Functions upstream of WOX11, a transcription factor that promotes the development of crown roots. The polypeptide is Indole-3-pyruvate monooxygenase YUCCA1 (Oryza sativa subsp. japonica (Rice)).